Reading from the N-terminus, the 625-residue chain is METFSLKDCSSVASSPISSPNISTLLKIKVLSWSKETGLPASVHVRVCNKSFNLHKSLLCAKSGYFKEREDQLSEIEIPQEFPGGAETFEKIMLFIYGCPTLIHPFNIAGLRCAAQFLEMTEQHSTGNLCERFDLYLNQVVLQNWDDTLVVLKKCQDLVPWSEDLLIVSRCIESLAFTACMEILDPERRREKPVIMLEGMVNQPWEYTNIERIINQDTWIKDLTDLPFEFFKKIIGSLRRQGMKERYVSPLVALYASKSVIPEGQTNTDILQRALDLLLTRDKAYRFVPVGFYFACLAHNLKHDTVLKLQDQIVSLLHTAQPENFIYPKAGNRQVAFSQELLTMESLFSVYVSTESERHLTSSSSNVRVGKLWDIFLSRLPYDQEMKTTRFIELIETVPMSFRESHDQLYLAVNAFLQVHTNISQEEKGSICSYLNCQKLSQEASLELVKNEKMPLRLVVQALFIQQLNTHQAFKDCSDSFRFTNSADFSGSVVPSSRPLTSQQSPCTDDETGPRNRPLCFLMQKDATLDEFESTSFRIHNLEEQLVSLKKSLHSHDNLKKPNCLGKRSASRNKNTFGQVTTACIGSVSFTSQRKYANRLLQILRRVNLFGSRKTNRSKAGESER.

A BTB domain is found at 41 to 105 (ASVHVRVCNK…IYGCPTLIHP (65 aa)). The region spanning 217 to 469 (DTWIKDLTDL…VQALFIQQLN (253 aa)) is the NPH3 domain. The span at 494-507 (VPSSRPLTSQQSPC) shows a compositional bias: polar residues. Residues 494 to 513 (VPSSRPLTSQQSPCTDDETG) are disordered.

This sequence belongs to the NPH3 family.

Its pathway is protein modification; protein ubiquitination. Functionally, may act as a substrate-specific adapter of an E3 ubiquitin-protein ligase complex (CUL3-RBX1-BTB) which mediates the ubiquitination and subsequent proteasomal degradation of target proteins. This chain is BTB/POZ domain-containing protein At5g48130, found in Arabidopsis thaliana (Mouse-ear cress).